Consider the following 332-residue polypeptide: DGAT1/2-independent enzyme synthesizing storage lipids (332 aa).

At 1-10 the chain is on the lumenal side; the sequence is MIGSNESSTE. N-linked (GlcNAc...) asparagine glycosylation is present at N5. Residues 11 to 31 traverse the membrane as a helical segment; it reads GPIPTSYLSFLAYLLGEWTGV. The Cytoplasmic segment spans residues 32–45; it reads EHTEDYLSYGAYLS. The chain crosses the membrane as a helical span at residues 46–66; the sequence is WVLFPLAIVFILPVAIFFFCF. Over 67–332 the chain is Lumenal; the sequence is NTSLLLLHIY…ERFQTRQKED (266 aa). H132 is an active-site residue. The N-linked (GlcNAc...) asparagine glycan is linked to N289.

This sequence belongs to the diacylglycerol acyltransferase family. Highly divergent.

The protein localises to the endoplasmic reticulum membrane. It catalyses the reaction a 1,2-diacylglycerol + a 1,2-diacyl-sn-glycero-3-phosphocholine = a triacylglycerol + a 1-acyl-sn-glycero-3-phosphocholine. The enzyme catalyses a 1-O-alkyl-2-acyl-sn-glycero-3-phosphocholine + a 1,2-diacylglycerol = a 1-O-alkyl-sn-glycero-3-phosphocholine + a triacylglycerol. The catalysed reaction is a 2-acylglycerol + an acyl-CoA = a 1,2-diacylglycerol + CoA. It carries out the reaction an acyl-CoA + a 1,2-diacyl-sn-glycerol = a triacyl-sn-glycerol + CoA. It catalyses the reaction 2-(9Z-octadecenoyl)-glycerol + (9Z)-octadecenoyl-CoA = 1,2-di-(9Z-octadecenoyl)-glycerol + CoA. The enzyme catalyses 1,2-di-(9Z-octadecenoyl)-sn-glycerol + (9Z)-octadecenoyl-CoA = 1,2,3-tri-(9Z-octadecenoyl)-glycerol + CoA. In terms of biological role, catalytic subunit of the alternative triglyceride biosynthesis pathway, which mediates formation of triacylglycerol from diacylglycerol and membrane phospholipids. Synthesizes triacylglycerol at the expense of membrane phospholipids, such as phosphatidylcholine (PC) and its ether-linked form (ePC), thereby altering the composition of membranes. The alternative triglyceride biosynthesis pathway is probably required to provide the energy required for rapid growth when fuel sources are limiting. It maintains mitochondrial function during periods of extracellular lipid starvation. Can also use acyl-CoA as donor: acts as a acyl-CoA:monoacylglycerol acyltransferase (MGAT), but also shows acyl-CoA:diacylglycerol acyltransferase (DGAT) activity. In Gallus gallus (Chicken), this protein is DGAT1/2-independent enzyme synthesizing storage lipids (TMEM68).